The primary structure comprises 269 residues: Putative esterase/lipase 1 (269 aa).

Histidine 27 is an active-site residue. Catalysis depends on serine 94, which acts as the Charge relay system.

This sequence belongs to the lipase/esterase LIP3/BchO family.

The chain is Putative esterase/lipase 1 from Mycoplasma pneumoniae (strain ATCC 29342 / M129 / Subtype 1) (Mycoplasmoides pneumoniae).